Consider the following 217-residue polypeptide: Ribosomal RNA small subunit methyltransferase G (217 aa).

Residues glycine 74, leucine 79, 125–126 (IQ), and arginine 143 contribute to the S-adenosyl-L-methionine site.

It belongs to the methyltransferase superfamily. RNA methyltransferase RsmG family.

The protein resides in the cytoplasm. It catalyses the reaction guanosine(527) in 16S rRNA + S-adenosyl-L-methionine = N(7)-methylguanosine(527) in 16S rRNA + S-adenosyl-L-homocysteine. Specifically methylates the N7 position of guanine in position 527 of 16S rRNA. The chain is Ribosomal RNA small subunit methyltransferase G from Syntrophotalea carbinolica (strain DSM 2380 / NBRC 103641 / GraBd1) (Pelobacter carbinolicus).